The chain runs to 301 residues: Probable aspartoacylase (301 aa).

Residues His13 and Glu16 each coordinate Zn(2+). Substrate is bound by residues Arg54 and Asn61–Arg62. His105 contacts Zn(2+). Glu163 and Tyr273 together coordinate substrate.

This sequence belongs to the AspA/AstE family. Aspartoacylase subfamily. The cofactor is Zn(2+).

The catalysed reaction is an N-acyl-L-aspartate + H2O = a carboxylate + L-aspartate. The polypeptide is Probable aspartoacylase (Prochlorococcus marinus (strain AS9601)).